The following is a 337-amino-acid chain: Ketol-acid reductoisomerase (NADP(+)) (337 aa).

The KARI N-terminal Rossmann domain occupies 3-183 (VEMFYDDDAD…GGARAGVIKT (181 aa)). NADP(+) is bound by residues 26-29 (YGSQ), Lys49, Ser52, Ser54, and 84-87 (DTAQ). Residue His109 is part of the active site. Gly135 provides a ligand contact to NADP(+). A KARI C-terminal knotted domain is found at 184–329 (TFKEETETDL…KKLRDLMSWV (146 aa)). Residues Asp192, Glu196, Glu228, and Glu232 each coordinate Mg(2+). Ser253 serves as a coordination point for substrate.

It belongs to the ketol-acid reductoisomerase family. Requires Mg(2+) as cofactor.

The catalysed reaction is (2R)-2,3-dihydroxy-3-methylbutanoate + NADP(+) = (2S)-2-acetolactate + NADPH + H(+). It carries out the reaction (2R,3R)-2,3-dihydroxy-3-methylpentanoate + NADP(+) = (S)-2-ethyl-2-hydroxy-3-oxobutanoate + NADPH + H(+). It participates in amino-acid biosynthesis; L-isoleucine biosynthesis; L-isoleucine from 2-oxobutanoate: step 2/4. Its pathway is amino-acid biosynthesis; L-valine biosynthesis; L-valine from pyruvate: step 2/4. In terms of biological role, involved in the biosynthesis of branched-chain amino acids (BCAA). Catalyzes an alkyl-migration followed by a ketol-acid reduction of (S)-2-acetolactate (S2AL) to yield (R)-2,3-dihydroxy-isovalerate. In the isomerase reaction, S2AL is rearranged via a Mg-dependent methyl migration to produce 3-hydroxy-3-methyl-2-ketobutyrate (HMKB). In the reductase reaction, this 2-ketoacid undergoes a metal-dependent reduction by NADPH to yield (R)-2,3-dihydroxy-isovalerate. The sequence is that of Ketol-acid reductoisomerase (NADP(+)) from Mycolicibacterium smegmatis (strain ATCC 700084 / mc(2)155) (Mycobacterium smegmatis).